We begin with the raw amino-acid sequence, 436 residues long: Trigger factor (436 aa).

Positions 161 to 246 (DDQLNIDFVG…VNSVAEPKLP (86 aa)) constitute a PPIase FKBP-type domain.

Belongs to the FKBP-type PPIase family. Tig subfamily.

Its subcellular location is the cytoplasm. It catalyses the reaction [protein]-peptidylproline (omega=180) = [protein]-peptidylproline (omega=0). In terms of biological role, involved in protein export. Acts as a chaperone by maintaining the newly synthesized protein in an open conformation. Functions as a peptidyl-prolyl cis-trans isomerase. In Pseudomonas paraeruginosa (strain DSM 24068 / PA7) (Pseudomonas aeruginosa (strain PA7)), this protein is Trigger factor.